The sequence spans 255 residues: Electron transfer flavoprotein beta subunit lysine methyltransferase (255 aa).

Residues 1-32 constitute a mitochondrion transit peptide; it reads MAFSLCWKAPRSQWSFLQALNSGFPLFPWRTV.

The protein belongs to the methyltransferase superfamily. ETFBKMT family. Interacts with HSPD1; this protein may possibly be a methylation substrate.

The protein localises to the cytoplasm. It localises to the mitochondrion matrix. The catalysed reaction is L-lysyl-[protein] + 3 S-adenosyl-L-methionine = N(6),N(6),N(6)-trimethyl-L-lysyl-[protein] + 3 S-adenosyl-L-homocysteine + 3 H(+). Its function is as follows. Protein-lysine methyltransferase that selectively trimethylates the flavoprotein ETFB in mitochondria. Thereby, may negatively regulate the function of ETFB in electron transfer from Acyl-CoA dehydrogenases to the main respiratory chain. This Rattus norvegicus (Rat) protein is Electron transfer flavoprotein beta subunit lysine methyltransferase.